The primary structure comprises 327 residues: MAMTTEVKDELSRLVVKSVSARRAEVTSLLRFAGGLHIVGGRVVVEAEVDLGNVARRLRKDIFELYGYNAVVHVLSASGIRKSTRYVLRVANDGEALARQTGLLDNRGRPVRGLPAQVVGGSIADAEAAWRGAFLAHGSLTEPGRSSALEVSCPGPEAALALVGAARRLGVSAKAREVRGADRVVVRDGEAIGALLTRMGAQDTRLIWEERRMRREVRATANRLANFDDANLRRSARAAVAAAARVERALEILGDTVPDHLASAGKLRVEHRQASLEELGRLADPPMTKDAVAGRIRRLLSMADRKAKIEGIPDTESAVTPDLLEDA.

The segment at residues 275–308 (SLEELGRLADPPMTKDAVAGRIRRLLSMADRKAK) is a DNA-binding region (H-T-H motif).

The protein belongs to the WhiA family.

In terms of biological role, involved in cell division and chromosome segregation. The sequence is that of Probable cell division protein WhiA from Mycobacterium avium (strain 104).